The chain runs to 247 residues: tRNA pseudouridine synthase A (247 aa).

Asp52 (nucleophile) is an active-site residue. Tyr113 is a binding site for substrate.

The protein belongs to the tRNA pseudouridine synthase TruA family. As to quaternary structure, homodimer.

It carries out the reaction uridine(38/39/40) in tRNA = pseudouridine(38/39/40) in tRNA. Its function is as follows. Formation of pseudouridine at positions 38, 39 and 40 in the anticodon stem and loop of transfer RNAs. The chain is tRNA pseudouridine synthase A from Sinorhizobium medicae (strain WSM419) (Ensifer medicae).